Reading from the N-terminus, the 101-residue chain is Urinary protein 2 (101 aa).

Positions 1–21 (MGKHILLLPLGLSLLMSSLLA) are cleaved as a signal peptide. Residues 22–99 (LQCFRCTSFD…CSATPFCNMV (78 aa)) form the UPAR/Ly6 domain. 5 cysteine pairs are disulfide-bonded: cysteine 24–cysteine 51, cysteine 27–cysteine 36, cysteine 43–cysteine 70, cysteine 73–cysteine 89, and cysteine 90–cysteine 96. Residues asparagine 67 and asparagine 74 are each glycosylated (N-linked (GlcNAc...) asparagine).

Post-translationally, N-glycosylated.

It is found in the secreted. The protein is Urinary protein 2 of Rattus norvegicus (Rat).